Here is a 187-residue protein sequence, read N- to C-terminus: Ribosome-recycling factor (187 aa).

The protein belongs to the RRF family.

The protein localises to the cytoplasm. Functionally, responsible for the release of ribosomes from messenger RNA at the termination of protein biosynthesis. May increase the efficiency of translation by recycling ribosomes from one round of translation to another. This Roseobacter denitrificans (strain ATCC 33942 / OCh 114) (Erythrobacter sp. (strain OCh 114)) protein is Ribosome-recycling factor.